The chain runs to 112 residues: Colipase (112 aa).

The signal sequence occupies residues 1–17 (MEKVLILLLVALAVAYA). A propeptide spans 18–22 (VPDPR) (enterostatin, activation peptide). Intrachain disulfides connect Cys34–Cys45, Cys40–Cys56, Cys44–Cys78, Cys66–Cys86, and Cys80–Cys104.

It belongs to the colipase family. In terms of assembly, forms a 1:1 stoichiometric complex with pancreatic lipase.

The protein localises to the secreted. Functionally, colipase is a cofactor of pancreatic lipase. It allows the lipase to anchor itself to the lipid-water interface. Without colipase the enzyme is washed off by bile salts, which have an inhibitory effect on the lipase. Its function is as follows. Enterostatin has a biological activity as a satiety signal. In Bos taurus (Bovine), this protein is Colipase (CLPS).